The following is a 450-amino-acid chain: Glucose-6-phosphate isomerase (450 aa).

E291 (proton donor) is an active-site residue. Catalysis depends on residues H312 and K426.

The protein belongs to the GPI family.

It localises to the cytoplasm. The enzyme catalyses alpha-D-glucose 6-phosphate = beta-D-fructose 6-phosphate. It functions in the pathway carbohydrate biosynthesis; gluconeogenesis. The protein operates within carbohydrate degradation; glycolysis; D-glyceraldehyde 3-phosphate and glycerone phosphate from D-glucose: step 2/4. In terms of biological role, catalyzes the reversible isomerization of glucose-6-phosphate to fructose-6-phosphate. The chain is Glucose-6-phosphate isomerase from Clostridium perfringens (strain SM101 / Type A).